Consider the following 301-residue polypeptide: Homoserine kinase (301 aa).

89 to 99 provides a ligand contact to ATP; sequence KPGSGLGSSSA.

Belongs to the GHMP kinase family. Homoserine kinase subfamily.

It is found in the cytoplasm. It carries out the reaction L-homoserine + ATP = O-phospho-L-homoserine + ADP + H(+). It functions in the pathway amino-acid biosynthesis; L-threonine biosynthesis; L-threonine from L-aspartate: step 4/5. Catalyzes the ATP-dependent phosphorylation of L-homoserine to L-homoserine phosphate. The polypeptide is Homoserine kinase (Methanococcus maripaludis (strain C5 / ATCC BAA-1333)).